The following is a 63-amino-acid chain: Megourin-3 (63 aa).

Monomer. In terms of processing, contains four disulfide bonds.

The protein resides in the secreted. In terms of biological role, has antimicrobial activity against Gram-positive bacteria and fungi. The chain is Megourin-3 from Megoura viciae (Vetch aphid).